A 190-amino-acid chain; its full sequence is Elongation factor P 2 (190 aa).

This sequence belongs to the elongation factor P family.

The protein resides in the cytoplasm. The protein operates within protein biosynthesis; polypeptide chain elongation. Functionally, involved in peptide bond synthesis. Stimulates efficient translation and peptide-bond synthesis on native or reconstituted 70S ribosomes in vitro. Probably functions indirectly by altering the affinity of the ribosome for aminoacyl-tRNA, thus increasing their reactivity as acceptors for peptidyl transferase. This Chlamydia muridarum (strain MoPn / Nigg) protein is Elongation factor P 2 (efp2).